Here is a 362-residue protein sequence, read N- to C-terminus: E3 ubiquitin-protein ligase rififylin (362 aa).

Positions 17-37 (ETPPPQGARTQAYSNPGYSSF) are disordered. The segment covering 24–37 (ARTQAYSNPGYSSF) has biased composition (polar residues). The FYVE-type zinc-finger motif lies at 41 to 93 (TGSEPSCKACGVHFASTTRKQTCLDCKKNFCMTCSSQEGNGPRLCLLCLRFRA). The region spanning 101–120 (LMKMKVKDLRDYLSLHDIST) is the SAP 1 domain. The disordered stretch occupies residues 162 to 183 (LTQPQSSTVPPTSPGLPSSPAQ). Residues S225, S228, S231, and S239 each carry the phosphoserine modification. One can recognise an SAP 2 domain in the interval 249 to 263 (IEGLTVRQLKEILAR). Residues 315 to 350 (CKICMDSPIDCVLLECGHMVTCTKCGKRMNECPICR) form an RING-type zinc finger.

As to quaternary structure, interacts with CASP8 and CASP10. Interacts with RIPK1 (via protein kinase domain); involved in RIPK1 ubiquitination. Interacts with PRR5L. Interacts (via RING-type zinc finger) with p53/TP53; involved in p53/TP53 ubiquitination. Interacts (via RING-type zinc finger) with MDM2; the interaction stabilizes MDM2. Post-translationally, autoubiquitinated. In terms of processing, palmitoylated. Undergoes caspase-mediated cleavage upon death-receptor activation, by TNFSF10 for instance. May be mediated by the caspases CASP8 and CASP10 in a negative feedback loop. As to expression, ubiquitous. Detected in cerebrum, cerebellum, midbrain, brain stem, hippocampus, striatum, liver, heart, lung, kidney, muscle, spleen and testis.

The protein resides in the cytoplasm. Its subcellular location is the cytosol. It localises to the cell membrane. The protein localises to the recycling endosome membrane. The enzyme catalyses S-ubiquitinyl-[E2 ubiquitin-conjugating enzyme]-L-cysteine + [acceptor protein]-L-lysine = [E2 ubiquitin-conjugating enzyme]-L-cysteine + N(6)-ubiquitinyl-[acceptor protein]-L-lysine.. The protein operates within protein modification; protein ubiquitination. Its function is as follows. E3 ubiquitin-protein ligase that regulates several biological processes through the ubiquitin-mediated proteasomal degradation of various target proteins. Mediates 'Lys-48'-linked polyubiquitination of PRR5L and its subsequent proteasomal degradation thereby indirectly regulating cell migration through the mTORC2 complex. Also ubiquitinates the caspases CASP8 and CASP10, promoting their proteasomal degradation, to negatively regulate apoptosis downstream of death domain receptors. Also negatively regulates the tumor necrosis factor-mediated signaling pathway through targeting of RIPK1 to ubiquitin-mediated proteasomal degradation. Negatively regulates p53/TP53 through its direct ubiquitination and targeting to proteasomal degradation. Indirectly, may also negatively regulate p53/TP53 through ubiquitination and degradation of SFN. May also play a role in endocytic recycling. This Rattus norvegicus (Rat) protein is E3 ubiquitin-protein ligase rififylin.